Reading from the N-terminus, the 303-residue chain is tRNA dimethylallyltransferase 1 (303 aa).

G9 to T16 contributes to the ATP binding site. T11–T16 provides a ligand contact to substrate. Interaction with substrate tRNA stretches follow at residues D34–L37, Q158–R162, and R239–R244.

This sequence belongs to the IPP transferase family. As to quaternary structure, monomer. Requires Mg(2+) as cofactor.

It carries out the reaction adenosine(37) in tRNA + dimethylallyl diphosphate = N(6)-dimethylallyladenosine(37) in tRNA + diphosphate. Catalyzes the transfer of a dimethylallyl group onto the adenine at position 37 in tRNAs that read codons beginning with uridine, leading to the formation of N6-(dimethylallyl)adenosine (i(6)A). The sequence is that of tRNA dimethylallyltransferase 1 from Shewanella sediminis (strain HAW-EB3).